Consider the following 199-residue polypeptide: Inactive glutathione S-transferase D3 (199 aa).

Positions 1–64 (MVGKALGLEF…YLVEKYGKDD (64 aa)) constitute a GST N-terminal domain. Residues 34–36 (HSI) and 48–50 (ESR) each bind glutathione. Positions 70–199 (DIQKQAVINQ…RIEEKQNAAK (130 aa)) constitute a GST C-terminal domain.

It belongs to the GST superfamily. Delta family. As to quaternary structure, homodimer.

In terms of biological role, has no glutathione S-transferase activity. This chain is Inactive glutathione S-transferase D3, found in Drosophila melanogaster (Fruit fly).